The following is a 494-amino-acid chain: Glycerol kinase (494 aa).

T13 contacts ADP. Residues T13, T14, and S15 each coordinate ATP. T13 provides a ligand contact to sn-glycerol 3-phosphate. An ADP-binding site is contributed by R17. Residues R83, E84, Y135, and D244 each contribute to the sn-glycerol 3-phosphate site. Positions 83, 84, 135, 244, and 245 each coordinate glycerol. ADP contacts are provided by T266 and G309. Residues T266, G309, Q313, and G410 each contribute to the ATP site. Residues G410 and N414 each coordinate ADP.

The protein belongs to the FGGY kinase family.

The enzyme catalyses glycerol + ATP = sn-glycerol 3-phosphate + ADP + H(+). It participates in polyol metabolism; glycerol degradation via glycerol kinase pathway; sn-glycerol 3-phosphate from glycerol: step 1/1. Its activity is regulated as follows. Inhibited by fructose 1,6-bisphosphate (FBP). Functionally, key enzyme in the regulation of glycerol uptake and metabolism. Catalyzes the phosphorylation of glycerol to yield sn-glycerol 3-phosphate. The polypeptide is Glycerol kinase (Shewanella baltica (strain OS223)).